A 267-amino-acid chain; its full sequence is Putative transcription factor Ovo-like 1 (267 aa).

4 consecutive C2H2-type zinc fingers follow at residues 118-140, 146-168, 174-197, and 213-235; these read FTCRVCQKAFTYQRMLNRHMKCH, HLCTYCGKGFNDTFDLKRHVRTH, YKCSLCDKAFTQRCSLESHLKKIH, and YVCEECGCTSESQEGHVLHLKEH.

In terms of tissue distribution, expressed in fetal kidney, and also in adult pancreas and placenta. Not expressed in intestine, peripheral blood lymphocytes and ovary.

The protein resides in the nucleus. Its function is as follows. Putative transcription factor. Involved in hair formation and spermatogenesis. May function in the differentiation and/or maintenance of the urogenital system. This is Putative transcription factor Ovo-like 1 (OVOL1) from Homo sapiens (Human).